Consider the following 214-residue polypeptide: Ribosomal RNA small subunit methyltransferase G (214 aa).

S-adenosyl-L-methionine-binding positions include Gly78, Leu83, 129 to 130, and Arg144; that span reads AE.

This sequence belongs to the methyltransferase superfamily. RNA methyltransferase RsmG family.

The protein localises to the cytoplasm. It catalyses the reaction guanosine(527) in 16S rRNA + S-adenosyl-L-methionine = N(7)-methylguanosine(527) in 16S rRNA + S-adenosyl-L-homocysteine. In terms of biological role, specifically methylates the N7 position of guanine in position 527 of 16S rRNA. This Marinobacter nauticus (strain ATCC 700491 / DSM 11845 / VT8) (Marinobacter aquaeolei) protein is Ribosomal RNA small subunit methyltransferase G.